We begin with the raw amino-acid sequence, 96 residues long: Protein RnfH (96 aa).

Belongs to the UPF0125 (RnfH) family.

The protein is Protein RnfH of Escherichia coli O127:H6 (strain E2348/69 / EPEC).